The following is a 185-amino-acid chain: Ribosome-recycling factor (185 aa).

Belongs to the RRF family.

It localises to the cytoplasm. In terms of biological role, responsible for the release of ribosomes from messenger RNA at the termination of protein biosynthesis. May increase the efficiency of translation by recycling ribosomes from one round of translation to another. The sequence is that of Ribosome-recycling factor from Novosphingobium aromaticivorans (strain ATCC 700278 / DSM 12444 / CCUG 56034 / CIP 105152 / NBRC 16084 / F199).